The primary structure comprises 75 residues: MKLLLFTALVLVVISLIEVEAENERACIPLEKECTKTPGNCCSGLKCDCYRRFEQGVAKGVQCWCIEKDVTYKGV.

Positions 1–21 (MKLLLFTALVLVVISLIEVEA) are cleaved as a signal peptide. Positions 22-25 (ENER) are excised as a propeptide.

Belongs to the neurotoxin 19 (CSTX) family. 06 (U6-Lctx) subfamily. In terms of processing, contains 4 disulfide bonds. In terms of tissue distribution, expressed by the venom gland.

The protein localises to the secreted. This Lycosa singoriensis (Wolf spider) protein is U6-lycotoxin-Ls1g.